Reading from the N-terminus, the 205-residue chain is Holliday junction branch migration complex subunit RuvA (205 aa).

Positions 1–64 (MIGRLRGIIL…EDAQLLFGFN (64 aa)) are domain I. A domain II region spans residues 65 to 143 (DKQERALFRE…GLSGDLFNSV (79 aa)). The segment at 144–156 (SDIPLTSPANVDN) is flexible linker. The interval 157 to 205 (RVGEPEAEAAAALVALGYKPQEASRMISKIARPDADCETLIRDALRAAL) is domain III.

Belongs to the RuvA family. Homotetramer. Forms an RuvA(8)-RuvB(12)-Holliday junction (HJ) complex. HJ DNA is sandwiched between 2 RuvA tetramers; dsDNA enters through RuvA and exits via RuvB. An RuvB hexamer assembles on each DNA strand where it exits the tetramer. Each RuvB hexamer is contacted by two RuvA subunits (via domain III) on 2 adjacent RuvB subunits; this complex drives branch migration. In the full resolvosome a probable DNA-RuvA(4)-RuvB(12)-RuvC(2) complex forms which resolves the HJ.

It is found in the cytoplasm. In terms of biological role, the RuvA-RuvB-RuvC complex processes Holliday junction (HJ) DNA during genetic recombination and DNA repair, while the RuvA-RuvB complex plays an important role in the rescue of blocked DNA replication forks via replication fork reversal (RFR). RuvA specifically binds to HJ cruciform DNA, conferring on it an open structure. The RuvB hexamer acts as an ATP-dependent pump, pulling dsDNA into and through the RuvAB complex. HJ branch migration allows RuvC to scan DNA until it finds its consensus sequence, where it cleaves and resolves the cruciform DNA. In Pectobacterium atrosepticum (strain SCRI 1043 / ATCC BAA-672) (Erwinia carotovora subsp. atroseptica), this protein is Holliday junction branch migration complex subunit RuvA.